The primary structure comprises 308 residues: Aspartate carbamoyltransferase catalytic subunit (308 aa).

The carbamoyl phosphate site is built by Arg55 and Thr56. Lys83 is a binding site for L-aspartate. Carbamoyl phosphate is bound by residues Arg105, His133, and Gln136. L-aspartate is bound by residues Arg166 and Arg223. Positions 264 and 265 each coordinate carbamoyl phosphate.

Belongs to the aspartate/ornithine carbamoyltransferase superfamily. ATCase family. As to quaternary structure, heterododecamer (2C3:3R2) of six catalytic PyrB chains organized as two trimers (C3), and six regulatory PyrI chains organized as three dimers (R2).

It carries out the reaction carbamoyl phosphate + L-aspartate = N-carbamoyl-L-aspartate + phosphate + H(+). It functions in the pathway pyrimidine metabolism; UMP biosynthesis via de novo pathway; (S)-dihydroorotate from bicarbonate: step 2/3. Functionally, catalyzes the condensation of carbamoyl phosphate and aspartate to form carbamoyl aspartate and inorganic phosphate, the committed step in the de novo pyrimidine nucleotide biosynthesis pathway. In Salinispora tropica (strain ATCC BAA-916 / DSM 44818 / JCM 13857 / NBRC 105044 / CNB-440), this protein is Aspartate carbamoyltransferase catalytic subunit.